The chain runs to 164 residues: Transcription elongation factor GreA (164 aa).

This sequence belongs to the GreA/GreB family.

Necessary for efficient RNA polymerase transcription elongation past template-encoded arresting sites. The arresting sites in DNA have the property of trapping a certain fraction of elongating RNA polymerases that pass through, resulting in locked ternary complexes. Cleavage of the nascent transcript by cleavage factors such as GreA or GreB allows the resumption of elongation from the new 3'terminus. GreA releases sequences of 2 to 3 nucleotides. In Helicobacter pylori (strain P12), this protein is Transcription elongation factor GreA.